Consider the following 179-residue polypeptide: Sperm surface protein Sp17 (179 aa).

Over residues 72-109 the composition is skewed to basic and acidic residues; sequence HAFKDEPPEKSETQKIQPEKVAIEKETMPQETVKEKET. 2 disordered regions span residues 72–138 and 159–179; these read HAFK…EGLL and TRKE…ENNE. Positions 116–135 are enriched in acidic residues; that stretch reads EPTEEPQKEEEEEEDEEDLE. One can recognise an IQ domain in the interval 143–172; the sequence is MQDAAVKIQAVFRGHKTRKEYLKKRDSTDE. Over residues 161 to 170 the composition is skewed to basic and acidic residues; the sequence is KEYLKKRDST.

Homodimer. May interact with ROPN1. As to expression, testis- and sperm-specific.

It localises to the membrane. Sperm surface zona pellucida binding protein. Helps to bind spermatozoa to the zona pellucida with high affinity. Might function in binding zona pellucida and carbohydrates. The polypeptide is Sperm surface protein Sp17 (SPA17) (Monodelphis domestica (Gray short-tailed opossum)).